The primary structure comprises 434 residues: Calcium uptake protein 2, mitochondrial (434 aa).

Residues 1–22 constitute a mitochondrion transit peptide; the sequence is MAAAAGSCARVAAWGGKLRRGL. One can recognise an EF-hand 1 domain in the interval 172–207; the sequence is KPHSGFHVAFKMLDTDGNEMIEKREFFKLQKIISKQ. 6 residues coordinate Ca(2+): D185, D187, N189, M191, E193, and E196. Position 205 is a phosphoserine (S205). Positions 227 to 262 constitute an EF-hand 2; degenerate domain; the sequence is EPEINTTLQMRFFGKRGQRKLHYKEFRRFMENLQTE. In terms of domain architecture, EF-hand 3; degenerate spans 293–328; the sequence is TENKDIYWKNVREKLSAGESISLDEFKSFCHFTTHL. Positions 362–397 constitute an EF-hand 4 domain; sequence LSNNILDTVFKIFDLDGDECLSHEEFLGVLKNRMHR. D375, D377, D379, C381, and E386 together coordinate Ca(2+).

Belongs to the MICU1 family. MICU2 subfamily. In terms of assembly, heterodimer; disulfide-linked; heterodimerizes with MICU1. Component of the uniplex complex, composed of MCU, EMRE/SMDT1, MICU1 and MICU2 in a 4:4:1:1 stoichiometry.

The protein resides in the mitochondrion intermembrane space. It is found in the mitochondrion inner membrane. Functionally, calcium sensor of the mitochondrial calcium uniporter (MCU) channel, which senses calcium level via its EF-hand domains. MICU1 and MICU2 form a disulfide-linked heterodimer that stimulates and inhibits MCU activity, depending on the concentration of calcium. At low calcium levels, MICU1 occludes the pore of the MCU channel, preventing mitochondrial calcium uptake. At higher calcium levels, calcium-binding to MICU1 and MICU2 induces a conformational change that weakens MCU-MICU1 interactions and moves the MICU1-MICU2 heterodimer away from the pore, allowing calcium permeation through the MCU channel. The protein is Calcium uptake protein 2, mitochondrial of Homo sapiens (Human).